The chain runs to 233 residues: Sugar fermentation stimulation protein homolog (233 aa).

The protein belongs to the SfsA family.

This is Sugar fermentation stimulation protein homolog from Teredinibacter turnerae (strain ATCC 39867 / T7901).